Here is a 480-residue protein sequence, read N- to C-terminus: MKVLSVSSEVFPLIKTGGLADVSGALPIALKAFGVETKTLLPGYPAVMKVIRDPVVRLEFPDLLGEPAAVLEVQHEGLDLLILDAPAYYDRPGGPYVDPLGKDYPDNWRRFAALSLAASEIAAGLLPGWRPDLVHTHDWQAALTSVYMRYYPTPELPSVLTIHNIAFQGQFGPEIFPGLRLPAHAFATDSIEYYGTVGYLKGGLQTAHAITTVSPTYADEILTPEFGMGLEGVIASHIDNLHGIVNGIDTDIWNPATDPVVHTHYGPTTLKNREENRRSIAEFFHLDNDDAPIFCVISRLTWQKGMDIVANIADEIVAMGGKLVVLGSGEAALEGALLASASRHPGRIGVSIGYNEPMSHLMQAGCDAIIIPSRFEPCGLTQLYGLRYGCVPIVARTGGLNDTVIDANHAALAAKVATGIQFSPVTETGMLQAIRRAMHFYADRKLWTQLQKQGMKSDVSWEKSAERYAALYSSLVSKGM.

Lys15 lines the ADP-alpha-D-glucose pocket.

The protein belongs to the glycosyltransferase 1 family. Bacterial/plant glycogen synthase subfamily.

It catalyses the reaction [(1-&gt;4)-alpha-D-glucosyl](n) + ADP-alpha-D-glucose = [(1-&gt;4)-alpha-D-glucosyl](n+1) + ADP + H(+). Its pathway is glycan biosynthesis; glycogen biosynthesis. Its function is as follows. Synthesizes alpha-1,4-glucan chains using ADP-glucose. This Rhizobium leguminosarum bv. trifolii (strain WSM2304) protein is Glycogen synthase.